Here is a 248-residue protein sequence, read N- to C-terminus: 2,3-bisphosphoglycerate-dependent phosphoglycerate mutase (248 aa).

Substrate-binding positions include 8-15 (RHGESQWN), 21-22 (TG), Arg60, 87-90 (ERHY), Lys98, 114-115 (RR), and 183-184 (GN). His9 serves as the catalytic Tele-phosphohistidine intermediate. Glu87 (proton donor/acceptor) is an active-site residue.

The protein belongs to the phosphoglycerate mutase family. BPG-dependent PGAM subfamily. Homodimer.

It carries out the reaction (2R)-2-phosphoglycerate = (2R)-3-phosphoglycerate. It functions in the pathway carbohydrate degradation; glycolysis; pyruvate from D-glyceraldehyde 3-phosphate: step 3/5. Its function is as follows. Catalyzes the interconversion of 2-phosphoglycerate and 3-phosphoglycerate. The protein is 2,3-bisphosphoglycerate-dependent phosphoglycerate mutase of Teredinibacter turnerae (strain ATCC 39867 / T7901).